Reading from the N-terminus, the 121-residue chain is Small ribosomal subunit protein uS13 (121 aa).

Positions arginine 90–lysine 121 are disordered.

It belongs to the universal ribosomal protein uS13 family. Part of the 30S ribosomal subunit. Forms a loose heterodimer with protein S19. Forms two bridges to the 50S subunit in the 70S ribosome.

Its function is as follows. Located at the top of the head of the 30S subunit, it contacts several helices of the 16S rRNA. In the 70S ribosome it contacts the 23S rRNA (bridge B1a) and protein L5 of the 50S subunit (bridge B1b), connecting the 2 subunits; these bridges are implicated in subunit movement. Contacts the tRNAs in the A and P-sites. The polypeptide is Small ribosomal subunit protein uS13 (Lactiplantibacillus plantarum (strain ATCC BAA-793 / NCIMB 8826 / WCFS1) (Lactobacillus plantarum)).